Reading from the N-terminus, the 146-residue chain is Small ribosomal subunit protein uS13A (146 aa).

An N-acetylserine modification is found at S2. A Glycyl lysine isopeptide (Lys-Gly) (interchain with G-Cter in ubiquitin) cross-link involves residue K36. K48 bears the N6-methyllysine; by RKM1 mark. Residues K49, K80, and K96 each participate in a glycyl lysine isopeptide (Lys-Gly) (interchain with G-Cter in ubiquitin) cross-link.

This sequence belongs to the universal ribosomal protein uS13 family. As to quaternary structure, component of the small ribosomal subunit (SSU). Mature yeast ribosomes consist of a small (40S) and a large (60S) subunit. The 40S small subunit contains 1 molecule of ribosomal RNA (18S rRNA) and 33 different proteins (encoded by 57 genes). The large 60S subunit contains 3 rRNA molecules (25S, 5.8S and 5S rRNA) and 46 different proteins (encoded by 81 genes). N-terminally acetylated by acetyltransferase NatA.

Its subcellular location is the cytoplasm. Component of the ribosome, a large ribonucleoprotein complex responsible for the synthesis of proteins in the cell. The small ribosomal subunit (SSU) binds messenger RNAs (mRNAs) and translates the encoded message by selecting cognate aminoacyl-transfer RNA (tRNA) molecules. The large subunit (LSU) contains the ribosomal catalytic site termed the peptidyl transferase center (PTC), which catalyzes the formation of peptide bonds, thereby polymerizing the amino acids delivered by tRNAs into a polypeptide chain. The nascent polypeptides leave the ribosome through a tunnel in the LSU and interact with protein factors that function in enzymatic processing, targeting, and the membrane insertion of nascent chains at the exit of the ribosomal tunnel. This chain is Small ribosomal subunit protein uS13A, found in Saccharomyces cerevisiae (strain ATCC 204508 / S288c) (Baker's yeast).